The following is a 415-amino-acid chain: ATP-dependent RNA helicase RhlB (415 aa).

A Q motif motif is present at residues 9-37 (QRFSALPLHPIVRGALAKKGFDFCTPIQA). The region spanning 40 to 218 (LPISLNGRDV…FEDMNEPEYI (179 aa)) is the Helicase ATP-binding domain. Residue 53–60 (AQTGTGKT) participates in ATP binding. Positions 164-167 (DEAD) match the DEAD box motif. The region spanning 241-389 (DKMALLLTLM…VSQYETEALL (149 aa)) is the Helicase C-terminal domain.

This sequence belongs to the DEAD box helicase family. RhlB subfamily. Component of the RNA degradosome, which is a multiprotein complex involved in RNA processing and mRNA degradation.

The protein resides in the cytoplasm. The enzyme catalyses ATP + H2O = ADP + phosphate + H(+). Its function is as follows. DEAD-box RNA helicase involved in RNA degradation. Has RNA-dependent ATPase activity and unwinds double-stranded RNA. The chain is ATP-dependent RNA helicase RhlB from Haemophilus influenzae (strain ATCC 51907 / DSM 11121 / KW20 / Rd).